We begin with the raw amino-acid sequence, 511 residues long: MKEFQGYLEKDRSRQQHLLYPLLFQEYIYALAHDHGLNGSIFSEPVEVFGYDNKSSLALVKRLITRIYQQNYLIISVNDSNQNGFVGDNRFFYSHFYSQMISESFAIIVEIPFSPRLVSDFKEKEIPKYHNLRSIHSIFPFLEDKLSHLNYVSDILIPHPIHMEISVQILQCWIQDIPFLHSLRFFLHEYHNSNSLLVTQKKSIHVFLKENKRLFQFLYNSYVFECEFLLVFTRKQSSYLRLTSFGTFLERTLFYGKIEYFICRNYFHRTLWFFKEPFMHYVRYQGKAILASKGTHLMMKKWKYHFVNFWQYYFHFWTQPYRXHINQLSNSFFYFLGYLSXLLRNSSAVRNQMLENSFLIDTVTKKFDTIVPVIFLIGSLSKAKFCTVSGHPISKPIWADLSDSDILDRFGRICRNLSHYHSGSSKKQGLYQIKYILQLSCARTLARKHKSTVRTFLRRLGSELLEEFFMEEEQVLSLIFPQTTPFTLHGSHRERIWYLDIICINDLVNHS.

It belongs to the intron maturase 2 family. MatK subfamily.

It localises to the plastid. It is found in the chloroplast. Functionally, usually encoded in the trnK tRNA gene intron. Probably assists in splicing its own and other chloroplast group II introns. This is Maturase K from Bowiea volubilis (Climbing onion).